Here is a 145-residue protein sequence, read N- to C-terminus: D-aminoacyl-tRNA deacylase (145 aa).

Residues glycine 137–proline 138 carry the Gly-cisPro motif, important for rejection of L-amino acids motif.

Belongs to the DTD family. As to quaternary structure, homodimer.

The protein localises to the cytoplasm. It carries out the reaction glycyl-tRNA(Ala) + H2O = tRNA(Ala) + glycine + H(+). It catalyses the reaction a D-aminoacyl-tRNA + H2O = a tRNA + a D-alpha-amino acid + H(+). Functionally, an aminoacyl-tRNA editing enzyme that deacylates mischarged D-aminoacyl-tRNAs. Also deacylates mischarged glycyl-tRNA(Ala), protecting cells against glycine mischarging by AlaRS. Acts via tRNA-based rather than protein-based catalysis; rejects L-amino acids rather than detecting D-amino acids in the active site. By recycling D-aminoacyl-tRNA to D-amino acids and free tRNA molecules, this enzyme counteracts the toxicity associated with the formation of D-aminoacyl-tRNA entities in vivo and helps enforce protein L-homochirality. In Pseudomonas syringae pv. syringae (strain B728a), this protein is D-aminoacyl-tRNA deacylase.